Reading from the N-terminus, the 244-residue chain is Proteasome subunit alpha type-5 (244 aa).

Belongs to the peptidase T1A family. The 26S proteasome consists of a 20S proteasome core and two 19S regulatory subunits. The 20S proteasome core is composed of 28 subunits that are arranged in four stacked rings, resulting in a barrel-shaped structure. The two end rings are each formed by seven alpha subunits, and the two central rings are each formed by seven beta subunits. The catalytic chamber with the active sites is on the inside of the barrel.

The protein resides in the cytoplasm. The protein localises to the nucleus. Its function is as follows. The proteasome is a multicatalytic proteinase complex which is characterized by its ability to cleave peptides with Arg, Phe, Tyr, Leu, and Glu adjacent to the leaving group at neutral or slightly basic pH. The proteasome has an ATP-dependent proteolytic activity. This Drosophila melanogaster (Fruit fly) protein is Proteasome subunit alpha type-5 (Prosalpha5).